Here is a 1104-residue protein sequence, read N- to C-terminus: Nitrite reductase [NAD(P)H] (1104 aa).

Residue Gln-44–Glu-79 coordinates FAD. Tyr-146–Thr-176 provides a ligand contact to NAD(+). The segment at Lys-396–Pro-419 is disordered. [2Fe-2S] cluster contacts are provided by Cys-500, Cys-502, Cys-535, and Cys-538. Residues Cys-720, Cys-726, Cys-760, and Cys-764 each coordinate [4Fe-4S] cluster. Cys-764 is a binding site for siroheme. A Rieske domain is found at Trp-932–Tyr-1040. The [2Fe-2S] cluster site is built by Cys-976, His-978, Cys-1001, and His-1004. The segment at Gly-1081–Trp-1104 is disordered. The span at Pro-1094–Trp-1104 shows a compositional bias: polar residues.

Belongs to the nitrite and sulfite reductase 4Fe-4S domain family. In terms of assembly, homodimer. Requires siroheme as cofactor. [4Fe-4S] cluster serves as cofactor. The cofactor is FAD. It depends on [2Fe-2S] cluster as a cofactor.

It catalyses the reaction NH4(+) + 3 NADP(+) + 2 H2O = nitrite + 3 NADPH + 5 H(+). The enzyme catalyses NH4(+) + 3 NAD(+) + 2 H2O = nitrite + 3 NADH + 5 H(+). It participates in nitrogen metabolism; nitrate reduction (assimilation). The polypeptide is Nitrite reductase [NAD(P)H] (niiA) (Emericella nidulans (strain FGSC A4 / ATCC 38163 / CBS 112.46 / NRRL 194 / M139) (Aspergillus nidulans)).